The primary structure comprises 286 residues: MRLLPRLLLLLLLVFPATVLLRGGPGGSLAEAQDLSEDEETVEDSVIEDEDDEAEVEEDEPTDLAEDREEEDVSGEPEASPSADTTILFVKGEDFPANNIVRFLVGFTNKGTEDFIVESLDASFRYPQDYQFYIQNFTALPLNTIVPPQRQATFEYSFIPAEPMGGRPFGLVINLNYKDFNGNVFQDAVFNQTVTVIEREDGLDGQTIFMYMSLAGLGLLVVVGLHQLLESRNRKRPIQKVEMGTSSQNDVDMSWIPQETLNQINKASPRRLPRKRPQKRSVGSDE.

The first 21 residues, 1 to 21 (MRLLPRLLLLLLLVFPATVLL), serve as a signal peptide directing secretion. Residues 22-207 (RGGPGGSLAE…EREDGLDGQT (186 aa)) are Lumenal-facing. Residues 28–83 (SLAEAQDLSEDEETVEDSVIEDEDDEAEVEEDEPTDLAEDREEEDVSGEPEASPSA) are disordered. Over residues 34–75 (DLSEDEETVEDSVIEDEDDEAEVEEDEPTDLAEDREEEDVSG) the composition is skewed to acidic residues. N-linked (GlcNAc...) asparagine glycosylation is found at asparagine 136 and asparagine 191. Residues 208-228 (IFMYMSLAGLGLLVVVGLHQL) form a helical membrane-spanning segment. Residues 229-286 (LESRNRKRPIQKVEMGTSSQNDVDMSWIPQETLNQINKASPRRLPRKRPQKRSVGSDE) are Cytoplasmic-facing. The residue at position 247 (serine 247) is a Phosphoserine. Threonine 260 carries the post-translational modification Phosphothreonine. The disordered stretch occupies residues 264-286 (INKASPRRLPRKRPQKRSVGSDE). At serine 268 the chain carries Phosphoserine. Positions 268–279 (SPRRLPRKRPQK) are enriched in basic residues.

It belongs to the TRAP-alpha family. As to quaternary structure, heterotetramer of TRAP-alpha, TRAP-beta, TRAP-delta and TRAP-gamma. Interacts with palmitoylated calnexin (CALX), the interaction is required for efficient folding of glycosylated proteins. In terms of processing, phosphorylated in its cytoplasmic tail.

It is found in the endoplasmic reticulum membrane. Functionally, TRAP proteins are part of a complex whose function is to bind calcium to the ER membrane and thereby regulate the retention of ER resident proteins. May be involved in the recycling of the translocation apparatus after completion of the translocation process or may function as a membrane-bound chaperone facilitating folding of translocated proteins. In Oryctolagus cuniculus (Rabbit), this protein is Translocon-associated protein subunit alpha (SSR1).